Here is a 156-residue protein sequence, read N- to C-terminus: UPF0039 protein Mb2876c (156 aa).

The region spanning valine 8 to serine 150 is the N-acetyltransferase domain.

This sequence belongs to the UPF0039 (ElaA) family.

The chain is UPF0039 protein Mb2876c from Mycobacterium bovis (strain ATCC BAA-935 / AF2122/97).